The sequence spans 252 residues: tRNA (guanine-N(1)-)-methyltransferase (252 aa).

S-adenosyl-L-methionine contacts are provided by residues Gly113 and 133–138 (LGDYVL).

Belongs to the RNA methyltransferase TrmD family. In terms of assembly, homodimer.

It localises to the cytoplasm. The enzyme catalyses guanosine(37) in tRNA + S-adenosyl-L-methionine = N(1)-methylguanosine(37) in tRNA + S-adenosyl-L-homocysteine + H(+). Its function is as follows. Specifically methylates guanosine-37 in various tRNAs. The polypeptide is tRNA (guanine-N(1)-)-methyltransferase (Stenotrophomonas maltophilia (strain R551-3)).